The sequence spans 769 residues: Transferrin receptor protein 1 (769 aa).

Residues 1–70 are Cytoplasmic-facing; the sequence is MMDQARSAFS…KPKRFNGFIC (70 aa). Residues 1 to 70 form a mediates interaction with SH3BP4 region; that stretch reads MMDQARSAFS…KPKRFNGFIC (70 aa). A phosphoserine mark is found at serine 10 and serine 19. A Phosphotyrosine modification is found at tyrosine 20. The short motif at 20–23 is the Endocytosis signal element; the sequence is YTRF. Residue threonine 21 is modified to Phosphothreonine. A Phosphoserine modification is found at serine 24. Positions 61–64 match the Stop-transfer sequence motif; that stretch reads KPKR. A lipid anchor (S-palmitoyl cysteine) is attached at cysteine 70. A helical; Signal-anchor for type II membrane protein transmembrane segment spans residues 71 to 91; that stretch reads YGTIAIILFFLIGFMIGYLGY. Over 92–769 the chain is Extracellular; the sequence is CKRVEAKSEC…GDIWDIDNEF (678 aa). Threonine 107 is a glycosylation site (O-linked (GalNAc...) threonine). A PA domain is found at 232 to 322; it reads SKAATVTGRL…GTGDPYTPGF (91 aa). N-linked (GlcNAc...) asparagine glycosylation is found at asparagine 260 and asparagine 326. Residues 578-769 are ligand-binding; sequence TMDVYEKLIQ…GDIWDIDNEF (192 aa). A Cell attachment site motif is present at residues 655-657; that stretch reads RGD. N-linked (GlcNAc...) asparagine glycans are attached at residues asparagine 731 and asparagine 736.

It belongs to the peptidase M28 family. M28B subfamily. In terms of assembly, homodimer; disulfide-linked. Binds one transferrin molecule per subunit. Interacts with SH3BP4. Homodimer; disulfide-linked. Binds one transferrin or HFE molecule per subunit. Binds the HLA class II histocompatibility antigen, DR1. Interacts with SH3BP3. Interacts with STEAP3; facilitates TFRC endocytosis in erythroid precursor cells. Stearoylated by ZDHHC6 which inhibits TFRC-mediated activation of the JNK pathway and promotes mitochondrial fragmentation. Stearoylation does not affect iron uptake. In terms of processing, N- and O-glycosylated, phosphorylated and palmitoylated.

Its subcellular location is the cell membrane. It is found in the melanosome. In terms of biological role, cellular uptake of iron occurs via receptor-mediated endocytosis of ligand-occupied transferrin receptor into specialized endosomes. Endosomal acidification leads to iron release. The apotransferrin-receptor complex is then recycled to the cell surface with a return to neutral pH and the concomitant loss of affinity of apotransferrin for its receptor. Transferrin receptor is necessary for development of erythrocytes and the nervous system. Positively regulates T and B cell proliferation through iron uptake. Acts as a lipid sensor that regulates mitochondrial fusion by regulating activation of the JNK pathway. When dietary levels of stearate (C18:0) are low, promotes activation of the JNK pathway, resulting in HUWE1-mediated ubiquitination and subsequent degradation of the mitofusin MFN2 and inhibition of mitochondrial fusion. When dietary levels of stearate (C18:0) are high, TFRC stearoylation inhibits activation of the JNK pathway and thus degradation of the mitofusin MFN2. Mediates uptake of NICOL1 into fibroblasts where it may regulate extracellular matrix production. The polypeptide is Transferrin receptor protein 1 (TFRC) (Felis catus (Cat)).